Reading from the N-terminus, the 274-residue chain is NAD(P)H dehydrogenase [quinone] 1 (274 aa).

FAD contacts are provided by residues histidine 12, 18-19, and glutamine 67; that span reads FN. Serine 82 bears the Phosphoserine mark. Residue 104–107 participates in FAD binding; the sequence is LQWF. 126–128 is a binding site for substrate; the sequence is AYT. FAD contacts are provided by residues 148-151, tyrosine 156, and arginine 201; that span reads TTGG. The important for apoenzyme conformational stability stretch occupies residues 225–274; it reads PSSLFDLNFQAGFLMKKEVQDEEKNKKFGLSVGHHLGKSIPTDNQIKARK. Glycyl lysine isopeptide (Lys-Gly) (interchain with G-Cter in SUMO2) cross-links involve residues lysine 250 and lysine 251.

It belongs to the NAD(P)H dehydrogenase (quinone) family. As to quaternary structure, homodimer. Interacts with PDLIM4 isoform 2; this interaction stabilizes PDLIM4 isoform 2 in response to oxidative stress and protects it from ubiquitin-independent degradation by the core 20S proteasome. Interacts with TP73 (via SAM domain); this interaction is NADH-dependent, stabilizes TP73 in response to oxidative stress and protects it from ubiquitin-independent degradation by the 20S proteasome. Interacts with TP53; this interaction is NADH-dependent, stabilizes TP53 in response to oxidative stress and protects it from ubiquitin-independent degradation by the 20S proteasome. The cofactor is FAD.

It is found in the cytoplasm. Its subcellular location is the cytosol. The enzyme catalyses a quinone + NADH + H(+) = a quinol + NAD(+). It catalyses the reaction a quinone + NADPH + H(+) = a quinol + NADP(+). It carries out the reaction ubiquinone-10 + NADH + H(+) = ubiquinol-10 + NAD(+). The catalysed reaction is menadione + NADH + H(+) = menadiol + NAD(+). In terms of biological role, flavin-containing quinone reductase that catalyzes two-electron reduction of quinones to hydroquinones using either NADH or NADPH as electron donors. In a ping-pong kinetic mechanism, the electrons are sequentially transferred from NAD(P)H to flavin cofactor and then from reduced flavin to the quinone, bypassing the formation of semiquinone and reactive oxygen species. Regulates cellular redox state primarily through quinone detoxification. Reduces components of plasma membrane redox system such as coenzyme Q and vitamin quinones, producing antioxidant hydroquinone forms. In the process may function as superoxide scavenger to prevent hydroquinone oxidation and facilitate excretion. Alternatively, can activate quinones and their derivatives by generating redox reactive hydroquinones with DNA cross-linking antitumor potential. Acts as a gatekeeper of the core 20S proteasome known to degrade proteins with unstructured regions. Upon oxidative stress, interacts with tumor suppressors TP53 and TP73 in a NADH-dependent way and inhibits their ubiquitin-independent degradation by the 20S proteasome. The polypeptide is NAD(P)H dehydrogenase [quinone] 1 (NQO1) (Pongo abelii (Sumatran orangutan)).